Consider the following 576-residue polypeptide: WAP, Kazal, immunoglobulin, Kunitz and NTR domain-containing protein 2 (576 aa).

A signal peptide spans 1-34 (MWAPRCRRFWSRWEQVAALLLLLLLLGVPPRSLA). One can recognise a WAP domain in the interval 39 to 92 (RYSHAGICPNDMNPNLWVDAQSTCRRECETDQECETYEKCCPNVCGTKSCVAAR). Cystine bridges form between Cys46/Cys79, Cys62/Cys83, Cys66/Cys78, Cys72/Cys88, Cys134/Cys164, Cys138/Cys157, Cys146/Cys175, and Cys231/Cys287. Positions 126-177 (WDGQPVCKCKDRCEKEPSFTCASDGLTYYNRCYMDAEACSKGITLAVVTCRY) constitute a Kazal-like domain. An Ig-like C2-type domain is found at 210–303 (PALLNNPVHQ…GVLRADFPLS (94 aa)). N-linked (GlcNAc...) asparagine glycosylation is present at Asn319. 9 disulfides stabilise this stretch: Cys328/Cys378, Cys337/Cys361, Cys353/Cys374, Cys386/Cys436, Cys395/Cys419, Cys411/Cys432, Cys445/Cys515, Cys448/Cys517, and Cys459/Cys566. BPTI/Kunitz inhibitor domains lie at 328–378 (CLKP…MLAC) and 386–436 (CSLP…EESC). An NTR domain is found at 445 to 566 (CRACKPRQKL…LREVMHKKTC (122 aa)). Asn519 is a glycosylation site (N-linked (GlcNAc...) asparagine).

It belongs to the WFIKKN family. As to quaternary structure, interacts with both mature and propeptide myostatin/MSTN. Primarily expressed in ovary, testis and brain, but not in liver. In fetal tissues, it is primarily expressed in brain, skeletal muscle, thymus and kidney.

The protein resides in the secreted. Functionally, protease-inhibitor that contains multiple distinct protease inhibitor domains. Probably has serine protease- and metalloprotease-inhibitor activity. Inhibits the biological activity of mature myostatin, but not activin. In Homo sapiens (Human), this protein is WAP, Kazal, immunoglobulin, Kunitz and NTR domain-containing protein 2 (WFIKKN2).